The primary structure comprises 1783 residues: Doublecortin domain-containing protein 1 (1783 aa).

The tract at residues 93 to 133 is disordered; that stretch reads GLQDCSTHQTASDHSHDEISDLDSYKSNSKNNSCSISASKR. Residues 117 to 131 are compositionally biased toward low complexity; sequence YKSNSKNNSCSISAS. Positions 168 to 252 constitute a Doublecortin 1 domain; it reads KLQPRVIKVT…FLNPFKKIKD (85 aa). One can recognise a Ricin B-type lectin 1 domain in the interval 702 to 800; the sequence is WLITKTGMIL…HIHHGAWTTA (99 aa). The segment at 860 to 880 is disordered; the sequence is ASAQRWAIKHEGTSKPGQWKH. Residues 925–1015 enclose the Doublecortin 2 domain; sequence PICKTTEPYA…ELWINPDLSI (91 aa). The region spanning 1151–1266 is the Ricin B-type lectin 2 domain; the sequence is SCSPKHSKLH…GAANQKWHYM (116 aa).

As to quaternary structure, interacts with dynein intermediate chain, tubulin, RAB8A, RAB3IP, NUDC, PAFAH1B1 and DCTN1.

The protein localises to the midbody. It is found in the midbody ring. It localises to the cytoplasm. The protein resides in the cytoskeleton. Its subcellular location is the spindle. In terms of biological role, microtubule-binding protein which plays an important role in mediating dynein-dependent transport of RAB8A-positive vesicles to the midbody during cytokinesis. The polypeptide is Doublecortin domain-containing protein 1 (Homo sapiens (Human)).